A 380-amino-acid polypeptide reads, in one-letter code: Acetylornithine deacetylase (380 aa).

Residue histidine 79 coordinates Zn(2+). Residue aspartate 81 is part of the active site. Aspartate 109 is a binding site for Zn(2+). Glutamate 139 is an active-site residue. Glutamate 140, glutamate 164, and histidine 351 together coordinate Zn(2+).

It belongs to the peptidase M20A family. ArgE subfamily. Homodimer. Zn(2+) is required as a cofactor. The cofactor is Co(2+). Requires glutathione as cofactor.

The protein localises to the cytoplasm. The catalysed reaction is N(2)-acetyl-L-ornithine + H2O = L-ornithine + acetate. It functions in the pathway amino-acid biosynthesis; L-arginine biosynthesis; L-ornithine from N(2)-acetyl-L-ornithine (linear): step 1/1. Its function is as follows. Catalyzes the hydrolysis of the amide bond of N(2)-acetylated L-amino acids. Cleaves the acetyl group from N-acetyl-L-ornithine to form L-ornithine, an intermediate in L-arginine biosynthesis pathway, and a branchpoint in the synthesis of polyamines. The polypeptide is Acetylornithine deacetylase (Myxococcus xanthus).